Consider the following 799-residue polypeptide: Pentatricopeptide repeat-containing protein At2g26790, mitochondrial (799 aa).

A mitochondrion-targeting transit peptide spans Met1–Tyr27. PPR repeat units follow at residues Leu145 to Val179, Asp180 to Ala214, Asn215 to Thr250, Phe251 to Ala278, Leu282 to Leu316, Asp317 to Val351, Asn352 to Leu386, Asp387 to Pro421, Asp422 to Pro456, Asp457 to Pro491, Asn492 to Lys522, Cys523 to Pro553, Arg555 to Pro589, Gly590 to Pro624, Asp625 to Pro659, Asp660 to Glu695, Asp708 to Pro742, and Asp743 to Pro777.

This sequence belongs to the PPR family. P subfamily.

It is found in the mitochondrion. The polypeptide is Pentatricopeptide repeat-containing protein At2g26790, mitochondrial (Arabidopsis thaliana (Mouse-ear cress)).